A 256-amino-acid chain; its full sequence is Ras-related protein Rab-26 (256 aa).

Residues 1-51 (MSRKKTPKSKGASTPAASTLPTANGARPARSGTALSGPDAPPNGPLQPGRP) are disordered. Residues 12-23 (ASTPAASTLPTA) are compositionally biased toward low complexity. Residues S72, G73, V74, G75, K76, T77, C78, S95, and T96 each coordinate GTP. T77 serves as a coordination point for Mg(2+). 2 consecutive short sequence motifs (switch) follow at residues 86 to 101 (GAFLAGTFISTVGIDF) and 119 to 136 (DTAGQERFRSVTHAYYRD). Residues T96 and D119 each contribute to the Mg(2+) site. 6 residues coordinate GTP: G122, N177, K178, D180, A208, and K209. S-geranylgeranyl cysteine attachment occurs at residues C253 and C254.

Belongs to the small GTPase superfamily. Rab family. As to quaternary structure, interacts with RIMS1. Interacts with ADRA2B. Mg(2+) serves as cofactor. Predominantly expressed in brain.

It localises to the golgi apparatus membrane. The protein resides in the cytoplasmic vesicle. Its subcellular location is the secretory vesicle membrane. It carries out the reaction GTP + H2O = GDP + phosphate + H(+). Its activity is regulated as follows. Regulated by guanine nucleotide exchange factors (GEFs) which promote the exchange of bound GDP for free GTP. Regulated by GTPase activating proteins (GAPs) which increase the GTP hydrolysis activity. Inhibited by GDP dissociation inhibitors (GDIs). Its function is as follows. The small GTPases Rab are key regulators of intracellular membrane trafficking, from the formation of transport vesicles to their fusion with membranes. Rabs cycle between an inactive GDP-bound form and an active GTP-bound form that is able to recruit to membranes different set of downstream effectors directly responsible for vesicle formation, movement, tethering and fusion. RAB26 mediates transport of ADRA2A and ADRA2B from the Golgi to the cell membrane. Plays a role in the maturation of zymogenic granules and in pepsinogen secretion in the stomach. Plays a role in the secretion of amylase from acinar granules in the parotid gland. The polypeptide is Ras-related protein Rab-26 (Homo sapiens (Human)).